Here is a 327-residue protein sequence, read N- to C-terminus: 2-methoxy-6-polyprenyl-1,4-benzoquinol methylase, mitochondrial (327 aa).

The transit peptide at 1-43 directs the protein to the mitochondrion; sequence MAAPIRAFVLRVLSDSTRNIHHVLRCRSKYLCRRAAITARRGY. Residues Thr117, Asp171, and 199–200 each bind S-adenosyl-L-methionine; that span reads DA.

It belongs to the class I-like SAM-binding methyltransferase superfamily. MenG/UbiE family. As to quaternary structure, component of a multi-subunit COQ enzyme complex, composed of at least coq3, coq4, coq5, coq6, coq7 and coq9.

It is found in the mitochondrion inner membrane. The catalysed reaction is a 2-methoxy-6-(all-trans-polyprenyl)benzene-1,4-diol + S-adenosyl-L-methionine = a 5-methoxy-2-methyl-3-(all-trans-polyprenyl)benzene-1,4-diol + S-adenosyl-L-homocysteine + H(+). It participates in cofactor biosynthesis; ubiquinone biosynthesis. Its function is as follows. Methyltransferase required for the conversion of 2-polyprenyl-6-methoxy-1,4-benzoquinol (DDMQH2) to 2-polyprenyl-3-methyl-6-methoxy-1,4-benzoquinol (DMQH2). This is 2-methoxy-6-polyprenyl-1,4-benzoquinol methylase, mitochondrial from Danio rerio (Zebrafish).